Consider the following 342-residue polypeptide: Ribosomal RNA small subunit methyltransferase H (342 aa).

Residues 62 to 64 (GGH), aspartate 82, phenylalanine 108, aspartate 129, and glutamine 136 contribute to the S-adenosyl-L-methionine site. Residues 280-319 (RHSKGQYPEDENLPMPPKRPRYFSKPKRVGPSKAEISHNP) are disordered. A compositionally biased stretch (basic residues) spans 297-309 (KRPRYFSKPKRVG).

It belongs to the methyltransferase superfamily. RsmH family.

It is found in the cytoplasm. The catalysed reaction is cytidine(1402) in 16S rRNA + S-adenosyl-L-methionine = N(4)-methylcytidine(1402) in 16S rRNA + S-adenosyl-L-homocysteine + H(+). In terms of biological role, specifically methylates the N4 position of cytidine in position 1402 (C1402) of 16S rRNA. This Psychrobacter cryohalolentis (strain ATCC BAA-1226 / DSM 17306 / VKM B-2378 / K5) protein is Ribosomal RNA small subunit methyltransferase H.